Reading from the N-terminus, the 217-residue chain is Proteasome subunit beta type-9 (217 aa).

Residues methionine 1–glycine 18 constitute a propeptide, removed in mature form. Threonine 19 functions as the Nucleophile in the catalytic mechanism.

It belongs to the peptidase T1B family. As to quaternary structure, the 26S proteasome consists of a 20S proteasome core and two 19S regulatory subunits. The 20S proteasome core is composed of 28 subunits that are arranged in four stacked rings, resulting in a barrel-shaped structure. The two end rings are each formed by seven alpha subunits, and the two central rings are each formed by seven beta subunits. The catalytic chamber with the active sites is on the inside of the barrel. Component of the immunoproteasome, where it displaces the equivalent housekeeping subunit PSMB6. Autocleaved. The resulting N-terminal Thr residue of the mature subunit is responsible for the nucleophile proteolytic activity.

The protein resides in the cytoplasm. The protein localises to the nucleus. The catalysed reaction is Cleavage of peptide bonds with very broad specificity.. Functionally, the proteasome is a multicatalytic proteinase complex which is characterized by its ability to cleave peptides with Arg, Phe, Tyr, Leu, and Glu adjacent to the leaving group at neutral or slightly basic pH. The proteasome has an ATP-dependent proteolytic activity. This subunit is involved in antigen processing to generate class I binding peptides. The protein is Proteasome subunit beta type-9 (psmb9) of Oryzias latipes (Japanese rice fish).